A 321-amino-acid chain; its full sequence is MTQNTPFPIFPHRHLLGIKGLTLQDLTTLLDRADANVTLYQKNDKKKSILHGRTQINLFFESSTRTQSSFELAGKRLGADVMNMIISNSSVKKGETLIDTATTLNAMNPDILVIRHNCAGAASLLAQKIDCCVINAGDGAHEHPTQALLDALTIRRTKGRIEGLTVAICGDILHSRVARSNIISLNTLGARVRVVAPSTLLPTGIEDMGVEVFHTMQEGLKGADVVMMLRLQLERMTGAFIPSIREYFYHFGLHKENLIYAKNDCIIMHPGPINRGVEIASDIADGTRSMIHTQVEMGIAVRMAIMEALLDPRHDYNGEKK.

Carbamoyl phosphate-binding residues include Arg-65 and Thr-66. Lys-93 contacts L-aspartate. Carbamoyl phosphate contacts are provided by Arg-115, His-143, and Gln-146. Positions 176 and 230 each coordinate L-aspartate. The carbamoyl phosphate site is built by Gly-271 and Pro-272.

The protein belongs to the aspartate/ornithine carbamoyltransferase superfamily. ATCase family. As to quaternary structure, heterododecamer (2C3:3R2) of six catalytic PyrB chains organized as two trimers (C3), and six regulatory PyrI chains organized as three dimers (R2).

The catalysed reaction is carbamoyl phosphate + L-aspartate = N-carbamoyl-L-aspartate + phosphate + H(+). It functions in the pathway pyrimidine metabolism; UMP biosynthesis via de novo pathway; (S)-dihydroorotate from bicarbonate: step 2/3. Functionally, catalyzes the condensation of carbamoyl phosphate and aspartate to form carbamoyl aspartate and inorganic phosphate, the committed step in the de novo pyrimidine nucleotide biosynthesis pathway. The chain is Aspartate carbamoyltransferase catalytic subunit from Bartonella bacilliformis (strain ATCC 35685 / KC583 / Herrer 020/F12,63).